The primary structure comprises 86 residues: Putative membrane protein insertion efficiency factor (86 aa).

The protein belongs to the UPF0161 family.

The protein localises to the cell inner membrane. Could be involved in insertion of integral membrane proteins into the membrane. In Mannheimia succiniciproducens (strain KCTC 0769BP / MBEL55E), this protein is Putative membrane protein insertion efficiency factor.